A 77-amino-acid polypeptide reads, in one-letter code: Surfactant-associated protein 2 (77 aa).

A signal peptide spans 1 to 19; the sequence is MESLMRLFLLLALLSSSHA. Asn-61 carries an N-linked (GlcNAc...) asparagine glycan.

Post-translationally, N-glycosylated. In terms of tissue distribution, expressed in lung, and specifically in alveolar type II epithelial cells.

Its subcellular location is the secreted. It localises to the cytoplasmic vesicle. It is found in the secretory vesicle. The protein localises to the golgi apparatus. In terms of biological role, putative surfactant protein. In Mus musculus (Mouse), this protein is Surfactant-associated protein 2.